The chain runs to 116 residues: Nitrogenase-stabilizing/protective protein NifW (116 aa).

The protein belongs to the NifW family. In terms of assembly, homotrimer; associates with NifD.

In terms of biological role, may protect the nitrogenase Fe-Mo protein from oxidative damage. The chain is Nitrogenase-stabilizing/protective protein NifW from Rhodopseudomonas palustris (strain TIE-1).